The primary structure comprises 78 residues: Large ribosomal subunit protein bL28 (78 aa).

It belongs to the bacterial ribosomal protein bL28 family.

This chain is Large ribosomal subunit protein bL28, found in Pectobacterium atrosepticum (strain SCRI 1043 / ATCC BAA-672) (Erwinia carotovora subsp. atroseptica).